Reading from the N-terminus, the 356-residue chain is Protein MGF 360-10L (356 aa).

An ANK repeat occupies 58 to 90 (DLNTALMIAAKENNYQLIKLFTEWGANINYGYI). N-linked (GlcNAc...) asparagine; by host glycosylation occurs at N125. 2 consecutive transmembrane segments (helical) span residues 206-228 (LNTWWLICALCFNKLFDLHYLYE) and 249-271 (NFLTMYYCFILGADINMAMLAAI). N352 carries an N-linked (GlcNAc...) asparagine; by host glycan.

This sequence belongs to the asfivirus MGF 360 family.

It localises to the host membrane. Plays a role in virus cell tropism, and may be required for efficient virus replication in macrophages. The polypeptide is Protein MGF 360-10L (Ornithodoros (relapsing fever ticks)).